Consider the following 121-residue polypeptide: Small ribosomal subunit protein bS16 (121 aa).

A compositionally biased stretch (basic and acidic residues) spans Arg-85–Lys-110. Residues Arg-85–Glu-121 are disordered. Residues Ala-111 to Glu-121 show a composition bias toward low complexity.

Belongs to the bacterial ribosomal protein bS16 family.

This chain is Small ribosomal subunit protein bS16, found in Azorhizobium caulinodans (strain ATCC 43989 / DSM 5975 / JCM 20966 / LMG 6465 / NBRC 14845 / NCIMB 13405 / ORS 571).